The primary structure comprises 195 residues: Cytochrome c oxidase subunit 1 (195 aa).

A helical transmembrane segment spans residues 12 to 32 (MYWVLGFIFLFTLGGLTGIVL). Mg(2+) is bound by residues histidine 42 and aspartate 43. Position 50 (histidine 50) interacts with heme a3. Histidine 52 contributes to the Fe(II)-heme a binding site. 3 helical membrane-spanning segments follow: residues 59 to 79 (AVFA…GLVL), 88 to 108 (FIVM…LGLA), and 131 to 151 (GSLM…EAFL).

The protein belongs to the heme-copper respiratory oxidase family. As to quaternary structure, component of the cytochrome c oxidase (complex IV, CIV), a multisubunit enzyme composed of a catalytic core of 3 subunits and several supernumerary subunits. The complex exists as a monomer or a dimer and forms supercomplexes (SCs) in the inner mitochondrial membrane with ubiquinol-cytochrome c oxidoreductase (cytochrome b-c1 complex, complex III, CIII). The cofactor is heme. It depends on Cu cation as a cofactor.

It localises to the mitochondrion inner membrane. The catalysed reaction is 4 Fe(II)-[cytochrome c] + O2 + 8 H(+)(in) = 4 Fe(III)-[cytochrome c] + 2 H2O + 4 H(+)(out). It functions in the pathway energy metabolism; oxidative phosphorylation. Its function is as follows. Component of the cytochrome c oxidase, the last enzyme in the mitochondrial electron transport chain which drives oxidative phosphorylation. The respiratory chain contains 3 multisubunit complexes succinate dehydrogenase (complex II, CII), ubiquinol-cytochrome c oxidoreductase (cytochrome b-c1 complex, complex III, CIII) and cytochrome c oxidase (complex IV, CIV), that cooperate to transfer electrons derived from NADH and succinate to molecular oxygen, creating an electrochemical gradient over the inner membrane that drives transmembrane transport and the ATP synthase. Cytochrome c oxidase is the component of the respiratory chain that catalyzes the reduction of oxygen to water. Electrons originating from reduced cytochrome c in the intermembrane space (IMS) are transferred via the dinuclear copper A center (CU(A)) of subunit 2 and heme A of subunit 1 to the active site in subunit 1, a binuclear center (BNC) formed by heme A3 and copper B (CU(B)). The BNC reduces molecular oxygen to 2 water molecules using 4 electrons from cytochrome c in the IMS and 4 protons from the mitochondrial matrix. This chain is Cytochrome c oxidase subunit 1 (COI), found in Albinaria turrita (Door snail).